The sequence spans 388 residues: Succinyl-diaminopimelate desuccinylase (388 aa).

Residue His-75 coordinates Zn(2+). Asp-77 is an active-site residue. Asp-108 lines the Zn(2+) pocket. The Proton acceptor role is filled by Glu-142. Residues Glu-143, Glu-171, and His-361 each coordinate Zn(2+).

Belongs to the peptidase M20A family. DapE subfamily. In terms of assembly, homodimer. Zn(2+) is required as a cofactor. The cofactor is Co(2+).

The catalysed reaction is N-succinyl-(2S,6S)-2,6-diaminopimelate + H2O = (2S,6S)-2,6-diaminopimelate + succinate. Its pathway is amino-acid biosynthesis; L-lysine biosynthesis via DAP pathway; LL-2,6-diaminopimelate from (S)-tetrahydrodipicolinate (succinylase route): step 3/3. In terms of biological role, catalyzes the hydrolysis of N-succinyl-L,L-diaminopimelic acid (SDAP), forming succinate and LL-2,6-diaminopimelate (DAP), an intermediate involved in the bacterial biosynthesis of lysine and meso-diaminopimelic acid, an essential component of bacterial cell walls. This is Succinyl-diaminopimelate desuccinylase from Methylocella silvestris (strain DSM 15510 / CIP 108128 / LMG 27833 / NCIMB 13906 / BL2).